The primary structure comprises 260 residues: MLEILYQDPWLVAVNKPAGWLVHRSWLDRDEKVVVMQTVRDQIGQHVFTAHRLDRPTSGVLLMGLSSEAGRRLAQQFEQHHIRKRYHAIVRGWLIDDAVLDYPLVEERDKIADKFAREDKAPQPAVTQYRGLATVEMAVPTGRYPTTRYGLVELEPKTGRKHQLRRHLAHLRHPIIGDSKHGDLRQNRSAAEHFACRRLMLHASRLELTHPFTGQPLIIQAGLDETWMQVLTQFGWRGLLPDNERVEFTAASRQDETHLT.

The active site involves D54.

Belongs to the pseudouridine synthase RluA family.

The enzyme catalyses uridine(65) in tRNA = pseudouridine(65) in tRNA. In terms of biological role, responsible for synthesis of pseudouridine from uracil-65 in transfer RNAs. The protein is tRNA pseudouridine synthase C (truC) of Salmonella typhi.